Here is a 378-residue protein sequence, read N- to C-terminus: MAKRDYYEVLGVAKNASDDEIKKAYRKLAMKYHPDRNPDNKDAEEHFKEAKEAYEMLSDGQKRAAYDQYGHAGVDPNMAGAGGQGFGGFADAFGDIFGDIFGQAAGGAARGGRGGPQVYRGADLRYSMEITLEQAAHGYDTQIRVPSWVSCEVCHGSGAKPGTKPETCPTCHGQGTVRMSQGFFSIQQTCPKCHGTGTYIPEPCAHCHGSGKVKETKTLEVKIPAGIDDGMRIRSAGNGEPGINGGPPGDLYVEIHIKPHAVFERDGDDLHCQMPIPFTTAALGGEIEVPTLAGRASFPVPEGTQSGKTFRLRGKGIKGLRSSIAGDLYVHVQVETPVKLTDQQRDLLKQFEKSLAEGGARHSPQSKSWFDRMKSFFE.

Residues 5-70 (DYYEVLGVAK…QKRAAYDQYG (66 aa)) enclose the J domain. The CR-type zinc-finger motif lies at 138 to 216 (GYDTQIRVPS…CHGSGKVKET (79 aa)). Zn(2+) contacts are provided by Cys-151, Cys-154, Cys-168, Cys-171, Cys-190, Cys-193, Cys-204, and Cys-207. CXXCXGXG motif repeat units lie at residues 151–158 (CEVCHGSG), 168–175 (CPTCHGQG), 190–197 (CPKCHGTG), and 204–211 (CAHCHGSG).

Belongs to the DnaJ family. As to quaternary structure, homodimer. Zn(2+) serves as cofactor.

It is found in the cytoplasm. In terms of biological role, participates actively in the response to hyperosmotic and heat shock by preventing the aggregation of stress-denatured proteins and by disaggregating proteins, also in an autonomous, DnaK-independent fashion. Unfolded proteins bind initially to DnaJ; upon interaction with the DnaJ-bound protein, DnaK hydrolyzes its bound ATP, resulting in the formation of a stable complex. GrpE releases ADP from DnaK; ATP binding to DnaK triggers the release of the substrate protein, thus completing the reaction cycle. Several rounds of ATP-dependent interactions between DnaJ, DnaK and GrpE are required for fully efficient folding. Also involved, together with DnaK and GrpE, in the DNA replication of plasmids through activation of initiation proteins. The polypeptide is Chaperone protein DnaJ (Burkholderia vietnamiensis (strain G4 / LMG 22486) (Burkholderia cepacia (strain R1808))).